Consider the following 783-residue polypeptide: Lon protease (783 aa).

Residues 16–210 (LPLLASRGVV…KLLEIIKDEI (195 aa)) form the Lon N-terminal domain. 361-368 (GAPGVGKT) is an ATP binding site. The region spanning 597-778 (KDRVGVATGM…DQVLDLILGG (182 aa)) is the Lon proteolytic domain. Residues S684 and K727 contribute to the active site.

The protein belongs to the peptidase S16 family. As to quaternary structure, homohexamer. Organized in a ring with a central cavity.

The protein resides in the cytoplasm. It catalyses the reaction Hydrolysis of proteins in presence of ATP.. Functionally, ATP-dependent serine protease that mediates the selective degradation of mutant and abnormal proteins as well as certain short-lived regulatory proteins. Required for cellular homeostasis and for survival from DNA damage and developmental changes induced by stress. Degrades polypeptides processively to yield small peptide fragments that are 5 to 10 amino acids long. Binds to DNA in a double-stranded, site-specific manner. The sequence is that of Lon protease from Halothermothrix orenii (strain H 168 / OCM 544 / DSM 9562).